Consider the following 806-residue polypeptide: Putative phage-related protein YobO (806 aa).

The interval 1-23 (MVHFKNCPDPSLNANSQSHPEFS) is disordered. Positions 12 to 21 (LNANSQSHPE) are enriched in polar residues. PbH1 repeat units lie at residues 199–221 (VEYGWIKDVEAINAGLHGIDITS), 237–259 (SRYIWIDNCVTYGSGDDGITTHY), 260–292 (SEYIFISNCHSGNPRGTEFAEGVSNSNGIEIDD), 294–315 (SRHVWLLNNFTSGNIRGVEVKA), 419–441 (SQNITINGIKIRGFKKAGVDINL), and 448–470 (TDYIKISNFDIYKSAPKGISIGG).

In Bacillus subtilis (strain 168), this protein is Putative phage-related protein YobO (yobO).